The following is a 275-amino-acid chain: Large ribosomal subunit protein uL2 (275 aa).

The disordered stretch occupies residues 222–275 (GVAMNPVDHPMGGGEGRSSGGRHPCSPWGMPTKGYKTRKNKTTDKFIVRKRNKR).

Belongs to the universal ribosomal protein uL2 family. As to quaternary structure, part of the 50S ribosomal subunit. Forms a bridge to the 30S subunit in the 70S ribosome.

In terms of biological role, one of the primary rRNA binding proteins. Required for association of the 30S and 50S subunits to form the 70S ribosome, for tRNA binding and peptide bond formation. It has been suggested to have peptidyltransferase activity; this is somewhat controversial. Makes several contacts with the 16S rRNA in the 70S ribosome. The polypeptide is Large ribosomal subunit protein uL2 (Desulfatibacillum aliphaticivorans).